Consider the following 632-residue polypeptide: Chaperone protein DnaK (632 aa).

At threonine 199 the chain carries Phosphothreonine; by autocatalysis. Residues 597–611 (AAQQAGQAEGQAAQE) are compositionally biased toward low complexity. Residues 597 to 632 (AAQQAGQAEGQAAQEPSQSTGNAQAEATDAEYEEVK) form a disordered region. Residues 612-621 (PSQSTGNAQA) show a composition bias toward polar residues.

It belongs to the heat shock protein 70 family.

Its function is as follows. Acts as a chaperone. This Amoebophilus asiaticus (strain 5a2) protein is Chaperone protein DnaK.